A 340-amino-acid polypeptide reads, in one-letter code: Phosphate acyltransferase (340 aa).

The protein belongs to the PlsX family. As to quaternary structure, homodimer. Probably interacts with PlsY.

It localises to the cytoplasm. It catalyses the reaction a fatty acyl-[ACP] + phosphate = an acyl phosphate + holo-[ACP]. Its pathway is lipid metabolism; phospholipid metabolism. Functionally, catalyzes the reversible formation of acyl-phosphate (acyl-PO(4)) from acyl-[acyl-carrier-protein] (acyl-ACP). This enzyme utilizes acyl-ACP as fatty acyl donor, but not acyl-CoA. The polypeptide is Phosphate acyltransferase (Pseudomonas savastanoi pv. phaseolicola (strain 1448A / Race 6) (Pseudomonas syringae pv. phaseolicola (strain 1448A / Race 6))).